Reading from the N-terminus, the 399-residue chain is Forkhead box protein A4 (399 aa).

The fork-head DNA-binding region spans K119–K213. Positions R219–D234 are enriched in basic and acidic residues. The tract at residues R219–A290 is disordered. The span at S267 to G277 shows a compositional bias: polar residues.

It localises to the nucleus. Functionally, transcriptional repressor involved in embryonic nervous system development. Plays a role in the induction and patterning of the anterior-posterior neural axis. Involved in the establishment of floor plate differentiation from neural plate cells during gastrulation. Binds the anf1 promoter sequence to restrict expression of anf1 to the anterior of the neural plate, thereby patterning the forebrain. Can bind to the HNF-3-alpha DNA target sequence. Cooperates with t/bra in a dose-dependent manner to specify dorsal mesoderm formation, including notochord. May be involved in the dorso-ventral patterning of the mesoderm. Binds to DNA via the target sequence 5'-[GA]TAAA[TC]A-3', with 5'-GTAAATA-3' being the preferred binding site. The polypeptide is Forkhead box protein A4 (Xenopus tropicalis (Western clawed frog)).